The chain runs to 628 residues: RING finger protein 112 (628 aa).

Residues 57-98 (CSICLERPREPISLDCGHDFCPRCFSTHRVPGCGPPCCPECR) form an RING-type zinc finger. The segment at 132 to 628 (AVRAEPLLLV…GDREPLLQEE (497 aa)) is interaction with ZBTB16. The GB1/RHD3-type G domain maps to 167–409 (DTPVCLLAVL…RCPGYWSEGR (243 aa)). GTP is bound at residue 318–319 (RD). 2 helical membrane-spanning segments follow: residues 544–564 (LAAV…GVVG) and 577–597 (GMVA…GGGV).

The protein belongs to the TRAFAC class dynamin-like GTPase superfamily. GB1/RHD3 GTPase family. GB1 subfamily. As to quaternary structure, self-associates. Interacts with SP1 in an oxidative stress-regulated manner. Interacts with SIGMAR1 in an oxidative stress-regulated manner. Interacts with ZBTB16 (via C2H2-type zinc finger domains 1 and 2). In terms of processing, auto-ubiquitinated.

It is found in the membrane. The protein resides in the cytoplasm. The protein localises to the nucleus. It localises to the nuclear body. Its subcellular location is the nucleoplasm. It is found in the endosome. The protein resides in the cytoplasmic vesicle. The protein localises to the secretory vesicle. It localises to the synaptic vesicle. Its subcellular location is the postsynaptic density. It is found in the perikaryon. The protein resides in the cell projection. The protein localises to the neuron projection. The catalysed reaction is S-ubiquitinyl-[E2 ubiquitin-conjugating enzyme]-L-cysteine + [acceptor protein]-L-lysine = [E2 ubiquitin-conjugating enzyme]-L-cysteine + N(6)-ubiquitinyl-[acceptor protein]-L-lysine.. The protein operates within protein modification; protein ubiquitination. Its function is as follows. E3 ubiquitin-protein ligase that plays an important role in neuronal differentiation, including neurogenesis and gliogenesis, during brain development. During embryonic development initiates neuronal differentiation by inducing cell cycle arrest at the G0/G1 phase through up-regulation of cell-cycle regulatory proteins. Plays a role not only in the fetal period during the development of the nervous system, but also in the adult brain, where it is involved in the maintenance of neural functions and protection of the nervous tissue cells from oxidative stress-induced damage. Exhibits GTPase and E3 ubiquitin-protein ligase activities. Regulates dendritic spine density and synaptic neurotransmission; its ability to hydrolyze GTP is involved in the maintenance of dendritic spine density. In Bos taurus (Bovine), this protein is RING finger protein 112 (RNF112).